The following is a 287-amino-acid chain: Elongation factor Ts (287 aa).

Residues 80–83 (TDFL) are involved in Mg(2+) ion dislocation from EF-Tu.

Belongs to the EF-Ts family.

Its subcellular location is the cytoplasm. Functionally, associates with the EF-Tu.GDP complex and induces the exchange of GDP to GTP. It remains bound to the aminoacyl-tRNA.EF-Tu.GTP complex up to the GTP hydrolysis stage on the ribosome. The protein is Elongation factor Ts of Pseudomonas fluorescens (strain SBW25).